A 102-amino-acid polypeptide reads, in one-letter code: NADH-quinone oxidoreductase subunit K (102 aa).

3 consecutive transmembrane segments (helical) span residues 5-25, 31-51, and 66-86; these read IAHYLTVSAILFTLGVFGIFL, IVILMSIELILLSVNLNFVAF, and FVLTVAAAEAAIGLAILVVFF.

It belongs to the complex I subunit 4L family. NDH-1 is composed of 14 different subunits. Subunits NuoA, H, J, K, L, M, N constitute the membrane sector of the complex.

Its subcellular location is the cell inner membrane. The catalysed reaction is a quinone + NADH + 5 H(+)(in) = a quinol + NAD(+) + 4 H(+)(out). NDH-1 shuttles electrons from NADH, via FMN and iron-sulfur (Fe-S) centers, to quinones in the respiratory chain. The immediate electron acceptor for the enzyme in this species is believed to be ubiquinone. Couples the redox reaction to proton translocation (for every two electrons transferred, four hydrogen ions are translocated across the cytoplasmic membrane), and thus conserves the redox energy in a proton gradient. This chain is NADH-quinone oxidoreductase subunit K, found in Brucella abortus (strain S19).